We begin with the raw amino-acid sequence, 219 residues long: Redox-sensing transcriptional repressor Rex (219 aa).

Positions R17–F56 form a DNA-binding region, H-T-H motif. G91–G96 provides a ligand contact to NAD(+).

The protein belongs to the transcriptional regulatory Rex family. As to quaternary structure, homodimer.

It is found in the cytoplasm. Its function is as follows. Modulates transcription in response to changes in cellular NADH/NAD(+) redox state. The protein is Redox-sensing transcriptional repressor Rex of Caldicellulosiruptor saccharolyticus (strain ATCC 43494 / DSM 8903 / Tp8T 6331).